The sequence spans 341 residues: L-threonine 3-dehydrogenase (341 aa).

Residue C38 participates in Zn(2+) binding. Catalysis depends on charge relay system residues T40 and H43. Zn(2+) contacts are provided by H63, E64, C93, C96, C99, and C107. NAD(+) contacts are provided by residues I175, D195, R200, L262 to I264, and I286 to Y287.

This sequence belongs to the zinc-containing alcohol dehydrogenase family. Homotetramer. Zn(2+) serves as cofactor.

Its subcellular location is the cytoplasm. The catalysed reaction is L-threonine + NAD(+) = (2S)-2-amino-3-oxobutanoate + NADH + H(+). It participates in amino-acid degradation; L-threonine degradation via oxydo-reductase pathway; glycine from L-threonine: step 1/2. In terms of biological role, catalyzes the NAD(+)-dependent oxidation of L-threonine to 2-amino-3-ketobutyrate. The polypeptide is L-threonine 3-dehydrogenase (Serratia proteamaculans (strain 568)).